We begin with the raw amino-acid sequence, 1476 residues long: Coiled-coil domain-containing protein 88B (1476 aa).

A coiled-coil region spans residues 253–481 (SHHLALQLAN…RGLLQVLQGQ (229 aa)). Disordered stretches follow at residues 427 to 451 (QRSL…SLQD), 509 to 706 (VAFD…EGAL), 825 to 866 (RRQW…ERRE), and 1323 to 1476 (LMRP…SLSQ). The residue at position 436 (serine 436) is a Phosphoserine. Polar residues predominate over residues 572 to 586 (SDWSPQESGSPVETQ). The residue at position 596 (serine 596) is a Phosphoserine. 3 stretches are compositionally biased toward basic and acidic residues: residues 678–690 (EARE…EGTV), 825–834 (RRQWEREGSR), and 842–866 (AEER…ERRE). Residues 720–1303 (LASGVAEQEA…KIMDQYRVLE (584 aa)) are a coiled coil. Serine 1348 and serine 1379 each carry phosphoserine. The span at 1448-1469 (LQEHETDANREGPEVQEPEKRP) shows a compositional bias: basic and acidic residues.

Belongs to the CCDC88 family. In terms of assembly, homodimer. Interacts with DOCK8. Interacts (via C-terminus) with intact microtubules. Interacts with dynein-dynactin motor complex. Interacts (via C-terminus) with HSPA5. As to expression, expressed in endothelium (at protein level). Expressed in NK cells (at protein level).

It localises to the membrane. The protein localises to the cytoplasm. The protein resides in the cytoskeleton. It is found in the microtubule organizing center. Its subcellular location is the endoplasmic reticulum. It localises to the golgi apparatus. Acts as a positive regulator of T-cell maturation and inflammatory function. Required for several functions of T-cells, in both the CD4(+) and the CD8(+) compartments and this includes expression of cell surface markers of activation, proliferation, and cytokine production in response to specific or non-specific stimulation. Enhances NK cell cytotoxicity by positively regulating polarization of microtubule-organizing center (MTOC) to cytotoxic synapse, lytic granule transport along microtubules, and dynein-mediated clustering to MTOC. Interacts with HSPA5 and stabilizes the interaction between HSPA5 and ERN1, leading to suppression of ERN1-induced JNK activation and endoplasmic reticulum stress-induced apoptosis. The polypeptide is Coiled-coil domain-containing protein 88B (CCDC88B) (Homo sapiens (Human)).